Consider the following 29-residue polypeptide: Phospholemman-like protein (29 aa).

Belongs to the FXYD family. In terms of processing, phosphorylated by protein kinase C.

It localises to the membrane. Induces a hyperpolarization-activated chloride current when expressed in Xenopus oocytes. In Scyliorhinus canicula (Small-spotted catshark), this protein is Phospholemman-like protein.